Reading from the N-terminus, the 545-residue chain is Arginine-containing cyclodipeptide synthase ateA (545 aa).

A compositionally biased stretch (polar residues) spans 390–425; sequence GNQQTPTQSADMDSTVSHRQQQPASSRSYTSKQNQM. Residues 390 to 433 form a disordered region; the sequence is GNQQTPTQSADMDSTVSHRQQQPASSRSYTSKQNQMPRPLVISV. A Conserved DDXXE motif motif is present at residues 434–438; it reads DDPSE.

Belongs to the arginine-containing cyclodipeptide synthase family.

It carries out the reaction L-glutamyl-tRNA(Glu) + L-arginyl-tRNA(Arg) = cyclo(L-arginyl-L-glutamyl) + tRNA(Glu) + tRNA(Arg) + 2 H(+). It participates in secondary metabolite biosynthesis. Its function is as follows. Arginine-containing cyclodipeptide synthase; part of the cluster that mediates the biosynthesis of a highly modified cyclo-arginine-glutamate dipeptide (cRE). Within the pathway, ateA acts as the scaffold-generating enzyme and is responsible for formation of the cyclo-Arg-Glu diketopiperazine (cRW) from L-arginyl-tRNA(Arg) + L-glutamyl-tRNA(Glu). Additional enzymes from the cluster then further modify the cyclo-Arg-Glu diketopiperazine (cRW) scaffold. The chain is Arginine-containing cyclodipeptide synthase ateA from Aspergillus terreus.